The primary structure comprises 240 residues: Methylthioribulose-1-phosphate dehydratase (240 aa).

Over residues 1–10 (MAQEIEKTNN) the composition is skewed to basic and acidic residues. The segment at 1 to 20 (MAQEIEKTNNDHLVQSSDPE) is disordered. Cys-100 contributes to the substrate binding site. The Zn(2+) site is built by His-117 and His-119. Glu-146 acts as the Proton donor/acceptor in catalysis. His-202 is a Zn(2+) binding site.

The protein belongs to the aldolase class II family. MtnB subfamily. Requires Zn(2+) as cofactor.

It is found in the cytoplasm. It carries out the reaction 5-(methylsulfanyl)-D-ribulose 1-phosphate = 5-methylsulfanyl-2,3-dioxopentyl phosphate + H2O. The protein operates within amino-acid biosynthesis; L-methionine biosynthesis via salvage pathway; L-methionine from S-methyl-5-thio-alpha-D-ribose 1-phosphate: step 2/6. Catalyzes the dehydration of methylthioribulose-1-phosphate (MTRu-1-P) into 2,3-diketo-5-methylthiopentyl-1-phosphate (DK-MTP-1-P). This Aspergillus fumigatus (strain CBS 144.89 / FGSC A1163 / CEA10) (Neosartorya fumigata) protein is Methylthioribulose-1-phosphate dehydratase.